The sequence spans 131 residues: UPF0102 protein YraN (131 aa).

It belongs to the UPF0102 family.

The protein is UPF0102 protein YraN of Salmonella arizonae (strain ATCC BAA-731 / CDC346-86 / RSK2980).